The sequence spans 82 residues: U-actitoxin-Avd3h (82 aa).

An N-terminal signal peptide occupies residues 1 to 16 (MVFLLCFFLVADVSYG). One can recognise a BPTI/Kunitz inhibitor domain in the interval 21-71 (CELPKVVGPCRARFPRYYYNSSSKRCEKFIYGGCRGNANNFHTLEECEKVC). Cystine bridges form between cysteine 21/cysteine 71, cysteine 30/cysteine 54, and cysteine 46/cysteine 67. The propeptide occupies 76-82 (RDSPKEN).

The protein belongs to the venom Kunitz-type family. Sea anemone type 2 potassium channel toxin subfamily.

It localises to the secreted. The protein resides in the nematocyst. Its function is as follows. Dual-function toxin that inhibits both the serine protease trypsin (Kd=30 nM) and voltage-gated potassium channels Kv1.2/KCNA2 (IC(50)=2800 nM). The sequence is that of U-actitoxin-Avd3h from Anemonia viridis (Snakelocks anemone).